The primary structure comprises 180 residues: Protein SPO16 homolog (180 aa).

Homooligomer. Interacts with SHOC, SYCP1 and SYCE3.

The protein resides in the chromosome. In terms of biological role, plays a key role in reinforcing the integrity of the central element of the synaptonemal complex (SC) thereby stabilizing SC, ensuring progression of meiotic prophase I in male and female germ cells. Promotes homologous recombination and crossing-over in meiotic prophase I via its association with SHOC1. Required for the localization of TEX11 and MSH4 to recombination intermediates. This chain is Protein SPO16 homolog, found in Homo sapiens (Human).